The primary structure comprises 293 residues: EID1-like F-box protein 1 (293 aa).

The region spanning 16–68 is the F-box domain; sequence QCTKGHLNEDVLLLVFQHLNWNPKLVATLSCVCRWFDDFAKRVLWKEFCKTRA. The tract at residues 245–293 is disordered; it reads AIPSEDNNHTEKKQDNGFPRENVLKRRNSLLGGSENGPPPQKRLTNPNQ. Positions 250–259 are enriched in basic and acidic residues; that stretch reads DNNHTEKKQD.

The protein is EID1-like F-box protein 1 (EDL1) of Arabidopsis thaliana (Mouse-ear cress).